Consider the following 43-residue polypeptide: Protein PsbN (43 aa).

Residues 5-27 (ALVAISISRLLVSFTGYALYTAF) traverse the membrane as a helical segment.

Belongs to the PsbN family.

Its subcellular location is the plastid. It localises to the chloroplast thylakoid membrane. Its function is as follows. May play a role in photosystem I and II biogenesis. The chain is Protein PsbN from Bowenia serrulata (Byfield fern).